Here is a 227-residue protein sequence, read N- to C-terminus: Riboflavin kinase (227 aa).

The tract at residues 1–92 (MSKDYEVFPL…LKRTIDSSTF (92 aa)) is H-T-H motif-like. A riboflavin kinase region spans residues 93–227 (LTLRGYVVPG…GDKVEVVIPV (135 aa)). 102–107 (GLGEGA) is a CDP binding site. Residues Thr131 and Asn133 each coordinate Mg(2+). FMN-binding residues include Thr194 and Glu202. A CDP-binding site is contributed by 207–210 (VRLR).

Belongs to the archaeal riboflavin kinase family. It depends on Mg(2+) as a cofactor.

The enzyme catalyses riboflavin + CTP = CDP + FMN + H(+). It functions in the pathway cofactor biosynthesis; FMN biosynthesis; FMN from riboflavin (CTP route): step 1/1. Functionally, catalyzes the CTP-dependent phosphorylation of riboflavin (vitamin B2) to form flavin mononucleotide (FMN). This Thermofilum pendens (strain DSM 2475 / Hrk 5) protein is Riboflavin kinase (ribK).